The chain runs to 203 residues: Small ribosomal subunit protein uS4c (203 aa).

Positions 17 to 39 are disordered; that stretch reads TLPGLTTKKSNKLNRPGKDGNTD. In terms of domain architecture, S4 RNA-binding spans 92–164; the sequence is MRLDTLCFTL…IKNNQVREIP (73 aa).

It belongs to the universal ribosomal protein uS4 family. As to quaternary structure, part of the 30S ribosomal subunit. Contacts protein S5. The interaction surface between S4 and S5 is involved in control of translational fidelity.

The protein localises to the plastid. It localises to the chloroplast. Functionally, one of the primary rRNA binding proteins, it binds directly to 16S rRNA where it nucleates assembly of the body of the 30S subunit. Its function is as follows. With S5 and S12 plays an important role in translational accuracy. In Phaeodactylum tricornutum (strain CCAP 1055/1), this protein is Small ribosomal subunit protein uS4c (rps4).